The following is a 204-amino-acid chain: VQ motif-containing protein 13 (204 aa).

The segment covering 1 to 12 has biased composition (basic and acidic residues); that stretch reads MEKSPRYRDKAK. The tract at residues 1–26 is disordered; sequence MEKSPRYRDKAKNLLPSPSSCTTTPT. Residues 16–26 show a composition bias toward low complexity; sequence PSPSSCTTTPT. A Phosphoserine modification is found at serine 17. The short motif at 46–55 is the VQ element; sequence FKQVVQLLTG. The segment at 56-90 is disordered; it reads IPKNPTHQPDPRFPPFHSIPPIKAVTNKKQSSSFR. Phosphoserine is present on residues serine 73 and serine 128. A Phosphothreonine modification is found at threonine 131. The disordered stretch occupies residues 133–204; sequence LMSDPFYRPG…HSPAPSPHDH (72 aa). Positions 143-152 are enriched in low complexity; the sequence is SFSQSPSDSK. 2 positions are modified to phosphoserine: serine 147 and serine 173. Phosphothreonine is present on residues threonine 177 and threonine 192. Serine 196 and serine 200 each carry phosphoserine.

In terms of processing, phosphorylated on serine and threonine residues by MPK6.

The protein resides in the nucleus. Its function is as follows. May modulate WRKY transcription factor activities. This chain is VQ motif-containing protein 13, found in Arabidopsis thaliana (Mouse-ear cress).